The following is a 119-amino-acid chain: Protein TusC (119 aa).

The protein belongs to the DsrF/TusC family. Heterohexamer, formed by a dimer of trimers. The hexameric TusBCD complex contains 2 copies each of TusB, TusC and TusD. The TusBCD complex interacts with TusE.

It is found in the cytoplasm. Its function is as follows. Part of a sulfur-relay system required for 2-thiolation of 5-methylaminomethyl-2-thiouridine (mnm(5)s(2)U) at tRNA wobble positions. This is Protein TusC from Serratia proteamaculans (strain 568).